The following is a 373-amino-acid chain: Sodium-dependent organic anion transporter (373 aa).

Residues 1–15 show a composition bias toward polar residues; the sequence is MSTDCAGNSTCPVNS. Residues 1-21 form a disordered region; sequence MSTDCAGNSTCPVNSTEEDPP. The Extracellular portion of the chain corresponds to 1–32; the sequence is MSTDCAGNSTCPVNSTEEDPPVGMEGHANLKL. 2 N-linked (GlcNAc...) asparagine glycosylation sites follow: Asn-8 and Asn-14. The chain crosses the membrane as a helical span at residues 33-53; the sequence is LFTVLSAVMVGLVMFSFGCSV. Residues 54–67 are Cytoplasmic-facing; it reads ESQKLWLHLRRPWG. The chain crosses the membrane as a helical span at residues 68-88; the sequence is IAVGLLSQFGLMPLTAYLLAI. The Extracellular portion of the chain corresponds to 89–97; the sequence is GFGLKPFQA. Residues 98 to 118 traverse the membrane as a helical segment; the sequence is IAVLMMGSCPGGTISNVLTFW. Over 119–126 the chain is Cytoplasmic; it reads VDGDMDLS. The helical transmembrane segment at 127 to 147 threads the bilayer; sequence ISMTTCSTVAALGMMPLCLYI. The Extracellular portion of the chain corresponds to 148–157; the sequence is YTRSWTLTQN. Residues 158–178 traverse the membrane as a helical segment; sequence LVIPYQSIGITLVSLVVPVAS. The Cytoplasmic segment spans residues 179–195; that stretch reads GVYVNYRWPKQATVILK. Residues 196–216 form a helical membrane-spanning segment; that stretch reads VGAILGGMLLLVVAVTGMVLA. The Extracellular portion of the chain corresponds to 217 to 224; the sequence is KGWNTDVT. A helical transmembrane segment spans residues 225–245; the sequence is LLVISCIFPLVGHVTGFLLAF. The Cytoplasmic portion of the chain corresponds to 246 to 265; the sequence is LTHQSWQRCRTISIETGAQN. A helical transmembrane segment spans residues 266-283; it reads IQLCIAMLQLSFSAEYLV. Residue Gln-284 is a topological domain, extracellular. The helical transmembrane segment at 285–305 threads the bilayer; sequence LLNFALAYGLFQVLHGLLIVA. Residues 306-373 are Cytoplasmic-facing; it reads AYQAYKRRQK…ELTSHIPSCE (68 aa).

This sequence belongs to the bile acid:sodium symporter (BASS) (TC 2.A.28) family. Glycosylated. In terms of tissue distribution, highest expression in lung and testis, moderate expression in heart, bladder and skin, and low expression in blood, liver, stomach, small intestine, spleen, kidney, adrenal gland, seminal vesicle, preputial gland, coagulating gland, lacrimal gland/eye, and brain.

The protein localises to the membrane. The catalysed reaction is estrone 3-sulfate(out) + 2 Na(+)(out) = estrone 3-sulfate(in) + 2 Na(+)(in). The enzyme catalyses 17beta-estradiol 3-sulfate(out) + 2 Na(+)(out) = 17beta-estradiol 3-sulfate(in) + 2 Na(+)(in). It catalyses the reaction dehydroepiandrosterone 3-sulfate(out) + 2 Na(+)(out) = dehydroepiandrosterone 3-sulfate(in) + 2 Na(+)(in). It carries out the reaction androst-5-ene-diol 3-sulfate(out) + 2 Na(+)(out) = androst-5-ene-diol 3-sulfate(in) + 2 Na(+)(in). The catalysed reaction is pregnenolone sulfate(out) + 2 Na(+)(out) = pregnenolone sulfate(in) + 2 Na(+)(in). The enzyme catalyses taurolithocholate 3-sulfate(out) + 2 Na(+)(out) = taurolithocholate 3-sulfate(in) + 2 Na(+)(in). It catalyses the reaction androsterone 3alpha-sulfate(out) + 2 Na(+)(out) = androsterone 3alpha-sulfate(in) + 2 Na(+)(in). It carries out the reaction 5alpha-dihydrotestosterone sulfate(out) + 2 Na(+)(out) = 5alpha-dihydrotestosterone sulfate(in) + 2 Na(+)(in). The catalysed reaction is 17beta-estradiol 17-sulfate(out) + 2 Na(+)(out) = 17beta-estradiol 17-sulfate(in) + 2 Na(+)(in). The enzyme catalyses 17alpha-hydroxypregnenolone 3-sulfate(out) + 2 Na(+)(out) = 17alpha-hydroxypregnenolone 3-sulfate(in) + 2 Na(+)(in). It catalyses the reaction epiandrosterone 3-sulfate(out) + 2 Na(+)(out) = epiandrosterone 3-sulfate(in) + 2 Na(+)(in). It carries out the reaction epitestosterone 17-sulfate(out) + 2 Na(+)(out) = epitestosterone 17-sulfate(in) + 2 Na(+)(in). The catalysed reaction is testosterone 17-sulfate(out) + 2 Na(+)(out) = testosterone 17-sulfate(in) + 2 Na(+)(in). The enzyme catalyses 16alpha-hydroxydehydroepiandrosterone 3-sulfate(out) + 2 Na(+)(out) = 16alpha-hydroxydehydroepiandrosterone 3-sulfate(in) + 2 Na(+)(in). Its function is as follows. Transports sulfoconjugated steroid hormones from the extracellular compartment into the cytosol in a sodium-dependent manner without hydrolysis. Steroid sulfate hormones are commonly considered to be biologically inactive metabolites, that may be activated by steroid sulfatases into free steroids. May play an important role by delivering sulfoconjugated steroids to specific target cells in reproductive organs. May play a role transporting the estriol precursor 16alpha-hydroxydehydroepiandrosterone 3-sulfate (16a-OH-DHEAS) at the fetal blood vessel endothelium. Can also transport other sulfoconjugated molecules such as taurolithocholic acid-3-sulfate and sulfoconjugated pyrenes. The chain is Sodium-dependent organic anion transporter (Slc10a6) from Mus musculus (Mouse).